A 228-amino-acid polypeptide reads, in one-letter code: Geranylgeranylglyceryl phosphate synthase (228 aa).

Lys13 is a sn-glycerol 1-phosphate binding site. Residues Asp15 and Thr41 each contribute to the Mg(2+) site. Sn-glycerol 1-phosphate is bound by residues 159-164 (YIEYSG), Gly189, and 209-210 (GN).

It belongs to the GGGP/HepGP synthase family. Group I subfamily. It depends on Mg(2+) as a cofactor.

The protein resides in the cytoplasm. The enzyme catalyses sn-glycerol 1-phosphate + (2E,6E,10E)-geranylgeranyl diphosphate = sn-3-O-(geranylgeranyl)glycerol 1-phosphate + diphosphate. The protein operates within membrane lipid metabolism; glycerophospholipid metabolism. Its function is as follows. Prenyltransferase that catalyzes the transfer of the geranylgeranyl moiety of geranylgeranyl diphosphate (GGPP) to the C3 hydroxyl of sn-glycerol-1-phosphate (G1P). This reaction is the first ether-bond-formation step in the biosynthesis of archaeal membrane lipids. This is Geranylgeranylglyceryl phosphate synthase from Methanospirillum hungatei JF-1 (strain ATCC 27890 / DSM 864 / NBRC 100397 / JF-1).